A 360-amino-acid polypeptide reads, in one-letter code: Membrane-bound lytic murein transglycosylase C (360 aa).

Positions 1–16 (MKKYLALALIAPLLVS) are cleaved as a signal peptide. Residue cysteine 17 is the site of N-palmitoyl cysteine attachment. Residue cysteine 17 is the site of S-diacylglycerol cysteine attachment.

This sequence belongs to the transglycosylase Slt family.

The protein localises to the cell outer membrane. The catalysed reaction is Exolytic cleavage of the (1-&gt;4)-beta-glycosidic linkage between N-acetylmuramic acid (MurNAc) and N-acetylglucosamine (GlcNAc) residues in peptidoglycan, from either the reducing or the non-reducing ends of the peptidoglycan chains, with concomitant formation of a 1,6-anhydrobond in the MurNAc residue.. Its function is as follows. Murein-degrading enzyme. May play a role in recycling of muropeptides during cell elongation and/or cell division. In Klebsiella pneumoniae subsp. pneumoniae (strain ATCC 700721 / MGH 78578), this protein is Membrane-bound lytic murein transglycosylase C.